Here is a 308-residue protein sequence, read N- to C-terminus: uncharacterized protein (308 aa).

The first 28 residues, 1 to 28 (MILMKKFEIILFLFIAVLIFVFGYFVGA), serve as a signal peptide directing secretion.

This is an uncharacterized protein from Methanocaldococcus jannaschii (strain ATCC 43067 / DSM 2661 / JAL-1 / JCM 10045 / NBRC 100440) (Methanococcus jannaschii).